A 221-amino-acid chain; its full sequence is Thiamine-phosphate synthase (221 aa).

Residues 44 to 48 and Asn79 contribute to the 4-amino-2-methyl-5-(diphosphooxymethyl)pyrimidine site; that span reads QFREK. Asp80 and Asp99 together coordinate Mg(2+). A 4-amino-2-methyl-5-(diphosphooxymethyl)pyrimidine-binding site is contributed by Ser117. 143 to 145 contributes to the 2-[(2R,5Z)-2-carboxy-4-methylthiazol-5(2H)-ylidene]ethyl phosphate binding site; sequence TRS. Position 146 (Lys146) interacts with 4-amino-2-methyl-5-(diphosphooxymethyl)pyrimidine. 2-[(2R,5Z)-2-carboxy-4-methylthiazol-5(2H)-ylidene]ethyl phosphate contacts are provided by residues Gly175 and 195 to 196; that span reads IS.

It belongs to the thiamine-phosphate synthase family. Requires Mg(2+) as cofactor.

It catalyses the reaction 2-[(2R,5Z)-2-carboxy-4-methylthiazol-5(2H)-ylidene]ethyl phosphate + 4-amino-2-methyl-5-(diphosphooxymethyl)pyrimidine + 2 H(+) = thiamine phosphate + CO2 + diphosphate. The catalysed reaction is 2-(2-carboxy-4-methylthiazol-5-yl)ethyl phosphate + 4-amino-2-methyl-5-(diphosphooxymethyl)pyrimidine + 2 H(+) = thiamine phosphate + CO2 + diphosphate. It carries out the reaction 4-methyl-5-(2-phosphooxyethyl)-thiazole + 4-amino-2-methyl-5-(diphosphooxymethyl)pyrimidine + H(+) = thiamine phosphate + diphosphate. Its pathway is cofactor biosynthesis; thiamine diphosphate biosynthesis; thiamine phosphate from 4-amino-2-methyl-5-diphosphomethylpyrimidine and 4-methyl-5-(2-phosphoethyl)-thiazole: step 1/1. Functionally, condenses 4-methyl-5-(beta-hydroxyethyl)thiazole monophosphate (THZ-P) and 2-methyl-4-amino-5-hydroxymethyl pyrimidine pyrophosphate (HMP-PP) to form thiamine monophosphate (TMP). This chain is Thiamine-phosphate synthase, found in Geobacillus thermodenitrificans (strain NG80-2).